Consider the following 115-residue polypeptide: Non-specific lipid-transfer protein 4.1 (115 aa).

Residues 1–25 (MARAAASQLVLVALVAAMLLVAADA) form the signal peptide. 4 cysteine pairs are disulfide-bonded: cysteine 29-cysteine 77, cysteine 39-cysteine 54, cysteine 55-cysteine 97, and cysteine 75-cysteine 111.

It belongs to the plant LTP family.

Its function is as follows. Plant non-specific lipid-transfer proteins transfer phospholipids as well as galactolipids across membranes. May play a role in wax or cutin deposition in the cell walls of expanding epidermal cells and certain secretory tissues. The polypeptide is Non-specific lipid-transfer protein 4.1 (LTP4.1) (Hordeum vulgare (Barley)).